An 871-amino-acid polypeptide reads, in one-letter code: Protein pob1 (871 aa).

An SH3 domain is found at 2–65 (ASQRFVIALH…PASHVELISD (64 aa)). The interval 42 to 168 (WWEGEDEQGN…PSSDLSNFNT (127 aa)) is disordered. Basic and acidic residues predominate over residues 62–80 (LISDERSDSSDSRRGKEDF). Composition is skewed to low complexity over residues 88-100 (TRSSLSSSRSTSS) and 109-124 (LYSNNSLSSSHSSILN). Residues 131 to 168 (SKPSVPSNFNSMFPSSKQEGPSPLLDNQPSSDLSNFNT) are compositionally biased toward polar residues. A phosphoserine mark is found at Ser-224 and Ser-225. Phosphotyrosine is present on Tyr-229. Residue Ser-241 is modified to Phosphoserine. The 64-residue stretch at 250-313 (WSTEEVVEWL…LRKIQQLKDS (64 aa)) folds into the SAM domain. Residues 329-343 (ISVSQSSDSSSSIPK) show a composition bias toward low complexity. 2 disordered regions span residues 329–371 (ISVS…NRPT) and 384–670 (PDLD…KSKR). Polar residues-rich tracts occupy residues 384-395 (PDLDSSPSTDWN) and 404-451 (TPSS…NSGL). Residues Ser-433, Ser-439, and Ser-440 each carry the phosphoserine modification. Phosphothreonine is present on Thr-442. Phosphoserine is present on Ser-444. The span at 456-467 (TEPISSPSTSSI) shows a compositional bias: low complexity. Polar residues predominate over residues 492–511 (QPSSNVPTKFTGGASESSSV). Ser-549 is subject to Phosphoserine. Positions 549-560 (SPSSISSRLPSS) are enriched in low complexity. Composition is skewed to polar residues over residues 561-574 (NLEQGSSSSVTKSP) and 583-606 (KASSPVTSKGVSINEKSAVNNYAT). Positions 698 to 808 (TADCHGWMRK…WSSAFLKATV (111 aa)) constitute a PH domain.

It localises to the cytoplasm. The protein localises to the membrane. Its function is as follows. Has a role in cell elongation and separation. This Schizosaccharomyces pombe (strain 972 / ATCC 24843) (Fission yeast) protein is Protein pob1 (pob1).